The following is a 528-amino-acid chain: Tyrosine--tRNA ligase, cytoplasmic (528 aa).

Residue Tyr-39 coordinates L-tyrosine. Residues 44–52 (TTGKPHVAY) carry the 'HIGH' region motif. L-tyrosine is bound by residues Tyr-166, Gln-170, Asp-173, and Gln-188. Residues 222–226 (KMSSS) carry the 'KMSKS' region motif. The short motif at 242-247 (KKKLKK) is the Nuclear localization signal element. Residues 335–364 (KLSNDAYPGASKQKTVPKGSTKNSGPEEID) form a disordered region. Residues 346–358 (KQKTVPKGSTKNS) are compositionally biased toward polar residues. Residues 364–468 (DPSLLDLRVG…TGSAPGERIY (105 aa)) enclose the tRNA-binding domain.

This sequence belongs to the class-I aminoacyl-tRNA synthetase family. Homodimer.

The protein localises to the cytoplasm. The protein resides in the nucleus. It catalyses the reaction tRNA(Tyr) + L-tyrosine + ATP = L-tyrosyl-tRNA(Tyr) + AMP + diphosphate + H(+). Catalyzes the attachment of tyrosine to tRNA(Tyr) in a two-step reaction: tyrosine is first activated by ATP to form Tyr-AMP and then transferred to the acceptor end of tRNA(Tyr). The sequence is that of Tyrosine--tRNA ligase, cytoplasmic (yars1) from Xenopus tropicalis (Western clawed frog).